The following is a 529-amino-acid chain: Peptide chain release factor 3 (529 aa).

The region spanning 11-280 (AKRRTFAIIS…GLVEWAPAPM (270 aa)) is the tr-type G domain. GTP-binding positions include 20–27 (SHPDAGKT), 88–92 (DTPGH), and 142–145 (NKLD).

The protein belongs to the TRAFAC class translation factor GTPase superfamily. Classic translation factor GTPase family. PrfC subfamily.

Its subcellular location is the cytoplasm. In terms of biological role, increases the formation of ribosomal termination complexes and stimulates activities of RF-1 and RF-2. It binds guanine nucleotides and has strong preference for UGA stop codons. It may interact directly with the ribosome. The stimulation of RF-1 and RF-2 is significantly reduced by GTP and GDP, but not by GMP. The sequence is that of Peptide chain release factor 3 from Escherichia coli O8 (strain IAI1).